The chain runs to 213 residues: Ripening-related protein 3 (213 aa).

A signal peptide spans 1–32; that stretch reads MAGAMTMSRRRLSHALLLVLAILPNLAALAVA.

It belongs to the kiwellin family.

Its subcellular location is the secreted. The protein is Ripening-related protein 3 of Oryza sativa subsp. japonica (Rice).